We begin with the raw amino-acid sequence, 814 residues long: G-type lectin S-receptor-like serine/threonine-protein kinase At1g61400 (814 aa).

A signal peptide spans 1–34; it reads MDFLFLLLERKNKHMGKKRVVLLWLSIFISFSSA. The region spanning 35–154 is the Bulb-type lectin domain; sequence EITEESPLSI…VSGRTLWESF (120 aa). Topologically, residues 35–436 are extracellular; sequence EITEESPLSI…ELDVNKRKKT (402 aa). N-linked (GlcNAc...) asparagine glycans are attached at residues Asn63, Asn104, Asn127, and Asn246. The EGF-like; atypical domain occupies 288 to 324; it reads PANSCDIYGVCGPFGFCVISVPPKCKCFKGFIPKSIE. 2 disulfides stabilise this stretch: Cys292-Cys304 and Cys298-Cys312. 3 N-linked (GlcNAc...) asparagine glycosylation sites follow: Asn330, Asn346, and Asn385. The PAN domain occupies 343 to 425; sequence CQGNSTGKDA…GELLSIRLAR (83 aa). 2 disulfide bridges follow: Cys378/Cys399 and Cys382/Cys388. A helical membrane pass occupies residues 437–457; that stretch reads IIAITVSLTLFVILGFTAFGF. Residues 458-814 lie on the Cytoplasmic side of the membrane; sequence WRRRVEQNAL…EMTESVIHGR (357 aa). Residues 500-785 enclose the Protein kinase domain; it reads FSLSNKLGHG…DLPLPKQPTF (286 aa). ATP is bound by residues 506–514 and Lys528; that span reads LGHGGFGSV. Residues Ser534 and Ser549 each carry the phosphoserine modification. The caM-binding stretch occupies residues 589-606; sequence KKRLEIDWPKRFDIIQGI. The active-site Proton acceptor is the Asp625. A phosphoserine mark is found at Ser629 and Ser642. Thr659 is subject to Phosphothreonine. Residues Ser702 and Ser796 each carry the phosphoserine modification.

The protein belongs to the protein kinase superfamily. Ser/Thr protein kinase family.

The protein resides in the cell membrane. It carries out the reaction L-seryl-[protein] + ATP = O-phospho-L-seryl-[protein] + ADP + H(+). The enzyme catalyses L-threonyl-[protein] + ATP = O-phospho-L-threonyl-[protein] + ADP + H(+). The chain is G-type lectin S-receptor-like serine/threonine-protein kinase At1g61400 from Arabidopsis thaliana (Mouse-ear cress).